A 305-amino-acid chain; its full sequence is Oxidoreductase OpS7 (305 aa).

It belongs to the oxidoreductase OpS7 family.

It participates in secondary metabolite biosynthesis. Functionally, oxidoreductase; part of the gene cluster that mediates the biosynthesis of the bibenzoquinone oosporein, a metabolite required for fungal virulence that acts by evading host immunity to facilitate fungal multiplication in insects. The non-reducing polyketide synthase OpS1 produces orsellinic acid by condensing acetyl-CoA with 3 malonyl-CoA units. Orsellinic acid is then hydroxylated to benzenetriol by the hydroxylase OpS4. The intermediate is oxidized either nonenzymatically to 5,5'-dideoxy-oosporein or enzymatically to benzenetetrol by the oxidoreductase OpS7. The latter is further dimerized to oosporein by the catalase OpS5. OpS6 probably functions en route for protecting cells against oxidative stress by scavenging any leaked free radical form of benzenetetrol by activating the thiol group of glutathione. The sequence is that of Oxidoreductase OpS7 from Beauveria bassiana (strain ARSEF 2860) (White muscardine disease fungus).